The chain runs to 104 residues: uncharacterized protein (104 aa).

This is an uncharacterized protein from Archaeoglobus fulgidus (strain ATCC 49558 / DSM 4304 / JCM 9628 / NBRC 100126 / VC-16).